We begin with the raw amino-acid sequence, 453 residues long: Putative F-box/FBD/LRR-repeat protein At1g66290 (453 aa).

The segment at 1-28 is disordered; that stretch reads MDEDGERRVRTKRSCSPESSDNGSGDEV. A compositionally biased stretch (polar residues) spans 14–23; it reads SCSPESSDNG. Residues 28–81 form the F-box domain; that stretch reads VDWISDLPEALIVLVLLNLPTKDVIKTSVLSTKWRNIWRYVPRLDLDNRHFTEF. LRR repeat units follow at residues 155 to 179, 210 to 235, 246 to 269, 305 to 329, and 358 to 381; these read SLKL…VLVL, LDNV…SSKS, APKL…NLSS, LSRV…RCEP, and CSNL…IISE. The FBD domain maps to 373–423; that stretch reads RKRTSIISEPRCLLSSLEYVKIEFALDKGKMELVRYLLENSPILKKLTLSL.

This Arabidopsis thaliana (Mouse-ear cress) protein is Putative F-box/FBD/LRR-repeat protein At1g66290.